The chain runs to 1091 residues: Isoleucine--tRNA ligase (1091 aa).

The short motif at Pro-48–His-58 is the 'HIGH' region element. The short motif at Lys-625–Ala-629 is the 'KMSKS' region element. Residue Lys-628 coordinates ATP.

It belongs to the class-I aminoacyl-tRNA synthetase family. IleS type 2 subfamily. As to quaternary structure, monomer. Zn(2+) is required as a cofactor.

Its subcellular location is the cytoplasm. It catalyses the reaction tRNA(Ile) + L-isoleucine + ATP = L-isoleucyl-tRNA(Ile) + AMP + diphosphate. Functionally, catalyzes the attachment of isoleucine to tRNA(Ile). As IleRS can inadvertently accommodate and process structurally similar amino acids such as valine, to avoid such errors it has two additional distinct tRNA(Ile)-dependent editing activities. One activity is designated as 'pretransfer' editing and involves the hydrolysis of activated Val-AMP. The other activity is designated 'posttransfer' editing and involves deacylation of mischarged Val-tRNA(Ile). The sequence is that of Isoleucine--tRNA ligase from Treponema pallidum (strain Nichols).